Reading from the N-terminus, the 1291-residue chain is Period circadian protein homolog 1 (1291 aa).

Residues 1–134 form a disordered region; that stretch reads MSGPLEGADG…SSEQSARART (134 aa). The interaction with BTRC stretch occupies residues 1 to 151; that stretch reads MSGPLEGADG…LRELKLRLPP (151 aa). The segment covering 48-115 has biased composition (low complexity); it reads NSNGSSGNES…AYSLLSASSE (68 aa). The span at 116 to 132 shows a compositional bias: polar residues; it reads QDNPSTSGCSSEQSARA. T121 is modified (phosphothreonine; by CSNK1E). Phosphoserine; by CSNK1E occurs at positions 122 and 126. The Nuclear export signal 1 motif lies at 138 to 147; that stretch reads LMTALRELKL. PAS domains lie at 208–275 and 348–414; these read ITSE…PSRL and YEAP…KILQ. A PAC domain is found at 422–465; that stretch reads HSPIRFCARNGEYVTMDTSWAGFVHPWSRKVAFVLGRHKVRTAP. Residues 489-498 carry the Nuclear export signal 2 motif; sequence LSEQIHRLLL. Disordered stretches follow at residues 508–544 and 647–698; these read GLCG…PAPV and TKRK…KEPV. Low complexity-rich tracts occupy residues 513-533 and 652-662; these read GPLM…SNGG and ASSSSYTASSA. Residues 596–815 form a required for phosphorylation by CSNK1E region; that stretch reads ELEVAPVPDQ…GLDTSSVAPS (220 aa). Residues S661, S663, and S704 each carry the phosphoserine modification. 3 disordered regions span residues 749–772, 809–873, and 938–1037; these read GLAP…TPDA, TSSV…PPAT, and SQAP…ALSG. Positions 751–769 are enriched in pro residues; the sequence is APGPAPSPAPSPTVAPDPT. S815 is subject to Phosphoserine. Residues 824–840 carry the Nuclear localization signal motif; the sequence is IPPGRRHHCRSKAKRSR. Positions 827–846 are enriched in basic residues; sequence GRRHHCRSKAKRSRHHHHQT. 2 stretches are compositionally biased toward pro residues: residues 859–873 and 955–965; these read SPVP…PPAT and PSLPPPPLSPP. A compositionally biased stretch (polar residues) spans 973-985; sequence FNSRCSSPLQLNL. S978 and S979 each carry phosphoserine. The Nuclear export signal 3 motif lies at 981-988; the sequence is LQLNLLQL. Residues 1042–1046 carry the LXXLL motif; the sequence is LELLL. The segment covering 1051–1061 has biased composition (low complexity); the sequence is RSGTGSAASGS. 2 disordered regions span residues 1051-1099 and 1207-1291; these read RSGT…YFGS and SVQD…NSTS. The segment covering 1062–1076 has biased composition (gly residues); that stretch reads LGSGLGSGSGSGSHE. Residues 1077–1094 are compositionally biased toward low complexity; the sequence is GGSTSASITRSSQSSHTS. The CRY binding domain stretch occupies residues 1148-1291; it reads SRDAASVLKQ…ALPAEENSTS (144 aa). A compositionally biased stretch (gly residues) spans 1235–1248; the sequence is GEGGGCGVGGGGGD. The segment covering 1253-1267 has biased composition (polar residues); the sequence is AQTQIGAKGSSSQDS.

In terms of assembly, homodimer. Component of the circadian core oscillator, which includes the CRY proteins, CLOCK or NPAS2, BMAL1 or BMAL2, CSNK1D and/or CSNK1E, TIMELESS, and the PER proteins. Interacts directly with TIMELESS. Interacts directly with PER2, PER3, CRY1 and CRY2. Interacts with BMAL1 and CLOCK. Interacts with GPRASP1. Interacts (phosphorylated) with BTRC and FBXW11; the interactions trigger proteasomal degradation. Interacts with NONO and SFPQ. Interacts with WDR5. Interacts with U2AF1L4 (Isoform 3). Interacts with USP2. Interacts with HNF4A. In terms of processing, phosphorylated on serine residues by CSNK1D, CSNK1E and probably also by CSNK1G2. Phosphorylation by CSNK1D or CSNK1E promotes nuclear location of PER proteins as well as ubiquitination and subsequent degradation. May be dephosphorylated by PP1. Ubiquitinated; requires phosphorylation by CSNK1E and interaction with BTRC and FBXW11. Deubiquitinated by USP2. As to expression, in brain, highest expression is observed in the SCN. Highly expressed in the pyramidal cell layer of the piriform cortex, the periventricular part of the caudate-putamen, many thalamic nuclei, and the granular layer of the cerebellar cortex. Weaker expression is detected in most area of the brain, including cortical and non cortical structures. Expression but no oscillations occurs in the glomerular and mitral cell layers of the olfactory bulb, the internal granular layer of the cerebellum, the cornu ammonis and dentate gyrus of the hippocampus, the cerebral and piriform cortices. Expressed in the renal cortex (at protein level). Also found in heart, brain, bladder, lumbar spinal cord, spleen, lung, liver, skeletal muscle and testis.

Its subcellular location is the nucleus. It localises to the cytoplasm. Functionally, transcriptional repressor which forms a core component of the circadian clock. The circadian clock, an internal time-keeping system, regulates various physiological processes through the generation of approximately 24 hour circadian rhythms in gene expression, which are translated into rhythms in metabolism and behavior. It is derived from the Latin roots 'circa' (about) and 'diem' (day) and acts as an important regulator of a wide array of physiological functions including metabolism, sleep, body temperature, blood pressure, endocrine, immune, cardiovascular, and renal function. Consists of two major components: the central clock, residing in the suprachiasmatic nucleus (SCN) of the brain, and the peripheral clocks that are present in nearly every tissue and organ system. Both the central and peripheral clocks can be reset by environmental cues, also known as Zeitgebers (German for 'timegivers'). The predominant Zeitgeber for the central clock is light, which is sensed by retina and signals directly to the SCN. The central clock entrains the peripheral clocks through neuronal and hormonal signals, body temperature and feeding-related cues, aligning all clocks with the external light/dark cycle. Circadian rhythms allow an organism to achieve temporal homeostasis with its environment at the molecular level by regulating gene expression to create a peak of protein expression once every 24 hours to control when a particular physiological process is most active with respect to the solar day. Transcription and translation of core clock components (CLOCK, NPAS2, BMAL1, BMAL2, PER1, PER2, PER3, CRY1 and CRY2) plays a critical role in rhythm generation, whereas delays imposed by post-translational modifications (PTMs) are important for determining the period (tau) of the rhythms (tau refers to the period of a rhythm and is the length, in time, of one complete cycle). A diurnal rhythm is synchronized with the day/night cycle, while the ultradian and infradian rhythms have a period shorter and longer than 24 hours, respectively. Disruptions in the circadian rhythms contribute to the pathology of cardiovascular diseases, cancer, metabolic syndromes and aging. A transcription/translation feedback loop (TTFL) forms the core of the molecular circadian clock mechanism. Transcription factors, CLOCK or NPAS2 and BMAL1 or BMAL2, form the positive limb of the feedback loop, act in the form of a heterodimer and activate the transcription of core clock genes and clock-controlled genes (involved in key metabolic processes), harboring E-box elements (5'-CACGTG-3') within their promoters. The core clock genes: PER1/2/3 and CRY1/2 which are transcriptional repressors form the negative limb of the feedback loop and interact with the CLOCK|NPAS2-BMAL1|BMAL2 heterodimer inhibiting its activity and thereby negatively regulating their own expression. This heterodimer also activates nuclear receptors NR1D1/2 and RORA/B/G, which form a second feedback loop and which activate and repress BMAL1 transcription, respectively. Regulates circadian target genes expression at post-transcriptional levels, but may not be required for the repression at transcriptional level. Controls PER2 protein decay. Represses CRY2 preventing its repression on CLOCK/BMAL1 target genes such as FXYD5 and SCNN1A in kidney and PPARA in liver. Besides its involvement in the maintenance of the circadian clock, has an important function in the regulation of several processes. Participates in the repression of glucocorticoid receptor NR3C1/GR-induced transcriptional activity by reducing the association of NR3C1/GR to glucocorticoid response elements (GREs) by BMAL1:CLOCK. Plays a role in the modulation of the neuroinflammatory state via the regulation of inflammatory mediators release, such as CCL2 and IL6. In spinal astrocytes, negatively regulates the MAPK14/p38 and MAPK8/JNK MAPK cascades as well as the subsequent activation of NFkappaB. Coordinately regulates the expression of multiple genes that are involved in the regulation of renal sodium reabsorption. Can act as gene expression activator in a gene and tissue specific manner, in kidney enhances WNK1 and SLC12A3 expression in collaboration with CLOCK. Modulates hair follicle cycling. Represses the CLOCK-BMAL1 induced transcription of BHLHE40/DEC1. This is Period circadian protein homolog 1 (Per1) from Mus musculus (Mouse).